Consider the following 129-residue polypeptide: MSNIPTELKYASSHEWIRKEEDGSYTVGITEHAQELLGDMVFVELPEVGDTVTAGNDCAVAESVKAASDIYAPISGEVIAVNEALEDSPELVNSDAYGEGWFFRVMPSDESEVDALLDAEGYQAVIDEE.

The Lipoyl-binding domain maps to 24 to 106; it reads SYTVGITEHA…YGEGWFFRVM (83 aa). Residue Lys65 is modified to N6-lipoyllysine.

Belongs to the GcvH family. As to quaternary structure, the glycine cleavage system is composed of four proteins: P, T, L and H. (R)-lipoate is required as a cofactor.

The glycine cleavage system catalyzes the degradation of glycine. The H protein shuttles the methylamine group of glycine from the P protein to the T protein. In Shewanella sp. (strain MR-7), this protein is Glycine cleavage system H protein.